The sequence spans 277 residues: Large ribosomal subunit protein uL2 (277 aa).

Residues 222–277 form a disordered region; sequence GVAMNPVDHPHGGGEGRTSGGRHPVTPWGKPTKGKKTRSNKATDKFIMRSRHQRKK.

It belongs to the universal ribosomal protein uL2 family. In terms of assembly, part of the 50S ribosomal subunit. Forms a bridge to the 30S subunit in the 70S ribosome.

One of the primary rRNA binding proteins. Required for association of the 30S and 50S subunits to form the 70S ribosome, for tRNA binding and peptide bond formation. It has been suggested to have peptidyltransferase activity; this is somewhat controversial. Makes several contacts with the 16S rRNA in the 70S ribosome. The sequence is that of Large ribosomal subunit protein uL2 from Brucella melitensis biotype 1 (strain ATCC 23456 / CCUG 17765 / NCTC 10094 / 16M).